The primary structure comprises 147 residues: Proteinase inhibitor type-2 T (147 aa).

An N-terminal signal peptide occupies residues 1 to 25 (MAVHKEVSFVAYLLIVLGMFLYVDA). 2 consecutive repeat copies span residues 25–82 (ALGC…PKNP) and 83–142 (KACP…EPKP). Cystine bridges form between cysteine 28–cysteine 116, cysteine 32–cysteine 112, cysteine 40–cysteine 122, cysteine 52–cysteine 89, cysteine 55–cysteine 73, cysteine 56–cysteine 85, cysteine 62–cysteine 98, and cysteine 115–cysteine 133.

It belongs to the protease inhibitor I20 (potato type II proteinase inhibitor) family.

Inhibitor of trypsin and chymotrypsin. This Solanum tuberosum (Potato) protein is Proteinase inhibitor type-2 T (PIN2T).